The chain runs to 504 residues: Maturase K (504 aa).

It belongs to the intron maturase 2 family. MatK subfamily.

It is found in the plastid. The protein resides in the chloroplast. Functionally, usually encoded in the trnK tRNA gene intron. Probably assists in splicing its own and other chloroplast group II introns. The chain is Maturase K from Quercus gemelliflora (Pasang hiris).